Here is a 307-residue protein sequence, read N- to C-terminus: Fe-S cluster assembly protein dre2 (307 aa).

2 disordered regions span residues 1-26 (MTPV…PSTS) and 159-179 (KKKK…VGFV). The segment covering 15-26 (AAPPTKTAPSTS) has biased composition (low complexity). The tract at residues 23–152 (PSTSTRTLLL…EKPAYQEAAV (130 aa)) is N-terminal SAM-like domain. The segment at 153 to 197 (PLRLGGKKKKAPAPTEQPPVATGVGFVDGNDELIDEDDLLSDDDL) is linker. 4 residues coordinate [2Fe-2S] cluster: C207, C219, C222, and C224. Positions 207 to 224 (CQPEKAKKRRRPCKDCTC) are fe-S binding site A. Residues C270, C273, C281, and C284 each coordinate [4Fe-4S] cluster. 2 consecutive short sequence motifs (cx2C motif) follow at residues 270-273 (CNSC) and 281-284 (CSSC). The interval 270–284 (CNSCSLGDAFRCSSC) is fe-S binding site B.

Belongs to the anamorsin family. Monomer. Interacts with tah18. Interacts with mia40. The cofactor is [2Fe-2S] cluster. [4Fe-4S] cluster serves as cofactor.

It localises to the cytoplasm. Its subcellular location is the mitochondrion intermembrane space. Component of the cytosolic iron-sulfur (Fe-S) protein assembly (CIA) machinery required for the maturation of extramitochondrial Fe-S proteins. Part of an electron transfer chain functioning in an early step of cytosolic Fe-S biogenesis, facilitating the de novo assembly of a [4Fe-4S] cluster on the scaffold complex cfd1-nbp35. Electrons are transferred to dre2 from NADPH via the FAD- and FMN-containing protein tah18. Tah18-dre2 are also required for the assembly of the diferric tyrosyl radical cofactor of ribonucleotide reductase (RNR), probably by providing electrons for reduction during radical cofactor maturation in the catalytic small subunit rnr2. In Aspergillus terreus (strain NIH 2624 / FGSC A1156), this protein is Fe-S cluster assembly protein dre2.